The primary structure comprises 132 residues: NADPH-dependent 7-cyano-7-deazaguanine reductase (132 aa).

The active-site Thioimide intermediate is Cys-34. Residue Asp-41 is the Proton donor of the active site. Substrate-binding positions include 56 to 58 (IEL) and 75 to 76 (HE).

This sequence belongs to the GTP cyclohydrolase I family. QueF type 1 subfamily.

The protein resides in the cytoplasm. It carries out the reaction 7-aminomethyl-7-carbaguanine + 2 NADP(+) = 7-cyano-7-deazaguanine + 2 NADPH + 3 H(+). It functions in the pathway tRNA modification; tRNA-queuosine biosynthesis. Catalyzes the NADPH-dependent reduction of 7-cyano-7-deazaguanine (preQ0) to 7-aminomethyl-7-deazaguanine (preQ1). The sequence is that of NADPH-dependent 7-cyano-7-deazaguanine reductase from Vesicomyosocius okutanii subsp. Calyptogena okutanii (strain HA).